A 624-amino-acid chain; its full sequence is Chaperone protein DnaK (624 aa).

T174 carries the phosphothreonine; by autocatalysis modification. Disordered regions lie at residues I470–V504 and N577–K624. Residues E481 to V504 show a composition bias toward basic and acidic residues. The segment covering N577–D605 has biased composition (low complexity). Residues G615 to K624 show a composition bias toward basic and acidic residues.

Belongs to the heat shock protein 70 family.

In terms of biological role, acts as a chaperone. This is Chaperone protein DnaK from Lactobacillus johnsonii (strain CNCM I-12250 / La1 / NCC 533).